Consider the following 465-residue polypeptide: Soluble pyridine nucleotide transhydrogenase (465 aa).

An FAD-binding site is contributed by 36 to 45 (ERYNNVGGGC).

Belongs to the class-I pyridine nucleotide-disulfide oxidoreductase family. The cofactor is FAD.

It is found in the cytoplasm. It carries out the reaction NAD(+) + NADPH = NADH + NADP(+). Its function is as follows. Conversion of NADPH, generated by peripheral catabolic pathways, to NADH, which can enter the respiratory chain for energy generation. This is Soluble pyridine nucleotide transhydrogenase from Serratia proteamaculans (strain 568).